An 845-amino-acid polypeptide reads, in one-letter code: Meiotically up-regulated gene 4 protein (845 aa).

The interval 122–158 is disordered; sequence LSTTDEQPKEPSIISISSSSSDPSSSPPPSSSLLKTP. Positions 132–145 are enriched in low complexity; sequence PSIISISSSSSDPS. The chain crosses the membrane as a helical span at residues 726-746; that stretch reads FLVFLTFTGMTLFILYQLTFP.

Its subcellular location is the membrane. Functionally, has a role in meiosis. The polypeptide is Meiotically up-regulated gene 4 protein (mug4) (Schizosaccharomyces pombe (strain 972 / ATCC 24843) (Fission yeast)).